Here is a 157-residue protein sequence, read N- to C-terminus: Large ribosomal subunit protein eL24 (157 aa).

Residue Lys2 forms a Glycyl lysine isopeptide (Lys-Gly) (interchain with G-Cter in SUMO2) linkage. Glu4 carries the ADP-ribosyl glutamic acid modification. Lys27 bears the N6-acetyllysine; alternate mark. Lys27 is covalently cross-linked (Glycyl lysine isopeptide (Lys-Gly) (interchain with G-Cter in SUMO2); alternate). A Glycyl lysine isopeptide (Lys-Gly) (interchain with G-Cter in SUMO2) cross-link involves residue Lys35. N6-acetyllysine is present on Lys77. Phosphothreonine is present on Thr83. Ser86 is subject to Phosphoserine. Lys93 carries the N6-acetyllysine modification. Over residues 106–117 (EQAIRAAKEAKK) the composition is skewed to basic and acidic residues. The disordered stretch occupies residues 106–157 (EQAIRAAKEAKKAKQASKKTAMAAAKAPTKAAPKQKIVKPVKVSAPRVGGKR). Low complexity predominate over residues 123–140 (KKTAMAAAKAPTKAAPKQ). An N6-succinyllysine modification is found at Lys131. Lys147 participates in a covalent cross-link: Glycyl lysine isopeptide (Lys-Gly) (interchain with G-Cter in SUMO2). Ser149 is modified (phosphoserine).

This sequence belongs to the eukaryotic ribosomal protein eL24 family. Component of the large ribosomal subunit. Post-translationally, mono-ADP-ribosylation at Glu-4 by PARP16 inhibits polysome assembly and mRNA loading, thereby inhibiting protein translation.

It localises to the cytoplasm. Component of the large ribosomal subunit. The ribosome is a large ribonucleoprotein complex responsible for the synthesis of proteins in the cell. The polypeptide is Large ribosomal subunit protein eL24 (RPL24) (Bos taurus (Bovine)).